The chain runs to 245 residues: uncharacterized protein (245 aa).

A run of 6 helical transmembrane segments spans residues 38 to 58, 68 to 88, 100 to 120, 129 to 149, 194 to 214, and 217 to 237; these read IYPA…AIFI, TIEL…QGYF, IWSL…LILA, VLFI…FVSA, VNNI…FLMN, and IAFI…LIIH.

This sequence belongs to the acyltransferase 3 family.

It localises to the cell membrane. This is an uncharacterized protein from Haemophilus influenzae (strain ATCC 51907 / DSM 11121 / KW20 / Rd).